A 346-amino-acid chain; its full sequence is Enkurin domain-containing protein 1 (346 aa).

3 disordered regions span residues 1–24, 88–107, and 113–132; these read MCEG…DYYR, SGVS…NLRR, and RRFQ…PLKA. At S91 the chain carries Phosphoserine. Basic and acidic residues-rich tracts occupy residues 98 to 107 and 113 to 125; these read KDHEKENLRR and RRFQ…REQG. S136 bears the Phosphoserine mark. The 93-residue stretch at 251 to 343 folds into the Enkurin domain; it reads ERRDLWRKEA…IFSRPKVFVK (93 aa). Positions 259 to 280 are disordered; it reads EAEARQRSQPDPSMPPGHTLMP.

In terms of assembly, interacts with alpha-tubulin. Interacts (via central region) with CCP110 (via N-terminal region); competes with CEP97 for binding to CCP110. Widely expressed with highest levels in testis and lung.

The protein localises to the cytoplasm. The protein resides in the cytoskeleton. It is found in the microtubule organizing center. Its subcellular location is the centrosome. It localises to the centriole. The protein localises to the cilium basal body. The protein resides in the cell projection. It is found in the cilium. Its subcellular location is the spindle. It localises to the spindle pole. The protein localises to the cilium axoneme. Microtubule-binding protein which regulates microtubule organization and stability. Promotes the stability of astral microtubules and facilitates the proper orientation of the mitotic spindle. This allows the oriented division of basal keratinocytes and contributes to epidermal stratification. Required for the assembly of both primary and motile cilia. Destabilizes the interaction between CCP110 and CEP97 by competing with CEP97 for binding to CCP110 which promotes the removal of CCP110 and CEP97 from the mother centriole and allows the initiation of ciliogenesis. The protein is Enkurin domain-containing protein 1 (Enkd1) of Mus musculus (Mouse).